The chain runs to 78 residues: UPF0349 protein GK2958 (78 aa).

Belongs to the UPF0349 family.

The chain is UPF0349 protein GK2958 from Geobacillus kaustophilus (strain HTA426).